A 147-amino-acid polypeptide reads, in one-letter code: uncharacterized protein (147 aa).

One can recognise an HTH asnC-type domain in the interval 2 to 63 (LDELDKKIIG…KLNYENIGYD (62 aa)). A DNA-binding region (H-T-H motif) is located at residues 21–40 (YREIAKELNVAVGTIYNRIK).

This is an uncharacterized protein from Pyrococcus abyssi (strain GE5 / Orsay).